The chain runs to 25 residues: LASP1 neighbor protein (25 aa).

The chain crosses the membrane as a helical span at residues 4 to 24 (IFILMFFAIIGLVILSYIIYL).

The protein localises to the membrane. In terms of biological role, may play a key role in the skin fibroblasts (FBs)-keratinocyte-like cells (KLCs). This is LASP1 neighbor protein from Homo sapiens (Human).